The chain runs to 172 residues: MATERAIFAGGCFWCMVQPFEEREGILSVISGYTGGNVENPTYEQVKKHLTGHTEAVEIIFDNSKITYQSLVELYWTLTDPTDAFGQFEDRGDNYRPVIFVENEEQEKIAKESKAQLQASGNFDSPIVTSIETVQKFWPAEDYHQGFYKKNPEDYAQSSKIRHDFLEKQWKK.

Residue C12 is part of the active site.

It belongs to the MsrA Met sulfoxide reductase family.

The enzyme catalyses L-methionyl-[protein] + [thioredoxin]-disulfide + H2O = L-methionyl-(S)-S-oxide-[protein] + [thioredoxin]-dithiol. The catalysed reaction is [thioredoxin]-disulfide + L-methionine + H2O = L-methionine (S)-S-oxide + [thioredoxin]-dithiol. In terms of biological role, has an important function as a repair enzyme for proteins that have been inactivated by oxidation. Catalyzes the reversible oxidation-reduction of methionine sulfoxide in proteins to methionine. The chain is Peptide methionine sulfoxide reductase MsrA 2 (msrA2) from Lactococcus lactis subsp. lactis (strain IL1403) (Streptococcus lactis).